Consider the following 226-residue polypeptide: ATP synthase subunit a (226 aa).

Transmembrane regions (helical) follow at residues 18 to 38 (LSLNWLSTFLGLFLIPVSYWL), 74 to 94 (FISLFSLIMFNNFLGLFPYIF), 100 to 120 (LTLTLALAFPLWLSFMLYGWI), 158 to 180 (LAVRLTANMIAGHLLLTLLGNTG), and 197 to 217 (IALLVLESAVAIIQSYVFAVL).

It belongs to the ATPase A chain family. As to quaternary structure, F-type ATPases have 2 components, CF(1) - the catalytic core - and CF(0) - the membrane proton channel. CF(1) has five subunits: alpha(3), beta(3), gamma(1), delta(1), epsilon(1). CF(0) has three main subunits: a, b and c.

It localises to the mitochondrion inner membrane. In terms of biological role, mitochondrial membrane ATP synthase (F(1)F(0) ATP synthase or Complex V) produces ATP from ADP in the presence of a proton gradient across the membrane which is generated by electron transport complexes of the respiratory chain. F-type ATPases consist of two structural domains, F(1) - containing the extramembraneous catalytic core and F(0) - containing the membrane proton channel, linked together by a central stalk and a peripheral stalk. During catalysis, ATP synthesis in the catalytic domain of F(1) is coupled via a rotary mechanism of the central stalk subunits to proton translocation. Key component of the proton channel; it may play a direct role in the translocation of protons across the membrane. The polypeptide is ATP synthase subunit a (mt:ATPase6) (Anopheles gambiae (African malaria mosquito)).